The following is a 453-amino-acid chain: Aspartic proteinase PCS1 (453 aa).

The signal sequence occupies residues M1–T18. The propeptide at Y19–T57 is activation peptide. N70 and N85 each carry an N-linked (GlcNAc...) asparagine glycan. The Peptidase A1 domain occupies L73 to A438. Residue D91 is part of the active site. N102, N175, N178, and N243 each carry an N-linked (GlcNAc...) asparagine glycan. D304 is a catalytic residue. 2 N-linked (GlcNAc...) asparagine glycosylation sites follow: N326 and N395.

This sequence belongs to the peptidase A1 family. In terms of tissue distribution, expressed specifically in developing gametophytes and developing seeds.

The protein resides in the endoplasmic reticulum. Its function is as follows. Embryo-specific aspartic protease that limits programmed cell death during reproductive development. Possesses peptidase activity toward casein in vitro. The sequence is that of Aspartic proteinase PCS1 (PCS1) from Arabidopsis thaliana (Mouse-ear cress).